A 418-amino-acid polypeptide reads, in one-letter code: Synaptotagmin-15 (418 aa).

Residues 1 to 4 (MAEQ) lie on the Extracellular side of the membrane. Residues 5 to 27 (LAFLIGGIIGGLLLLIGVSCCLW) form a helical; Signal-anchor for type III membrane protein membrane-spanning segment. The Cytoplasmic segment spans residues 28–418 (RRFCATFTYE…WHALCRPTEP (391 aa)). C2 domains lie at 144 to 261 (CLGR…HRII) and 275 to 396 (EFGD…EHWG).

Belongs to the synaptotagmin family. Homodimer. As to expression, isoform 1 and isoform 2 are expressed in heart, lung, skeletal muscle and testis; not detected in brain, liver and kidney. Isoform 1 is expressed in spleen.

It is found in the membrane. May be involved in the trafficking and exocytosis of secretory vesicles in non-neuronal tissues. The chain is Synaptotagmin-15 (Syt15) from Mus musculus (Mouse).